A 1002-amino-acid chain; its full sequence is Glutamate receptor ionotropic, NMDA 3B (1002 aa).

Positions 1–24 (MESVRTLWLSVALALAVGSRVVRG) are cleaved as a signal peptide. At 25-574 (HPQPCRVPTR…PIGAFMWPLH (550 aa)) the chain is on the extracellular side. N-linked (GlcNAc...) asparagine glycans are attached at residues asparagine 69, asparagine 212, asparagine 344, asparagine 451, and asparagine 465. Intrachain disulfides connect cysteine 439–cysteine 475 and cysteine 445–cysteine 476. 3 residues coordinate glycine: serine 531, serine 533, and arginine 538. Residues serine 533 and arginine 538 each contribute to the D-serine site. A helical membrane pass occupies residues 575–594 (WSMWVGVFAALHLTALFLTL). Topologically, residues 595 to 615 (YEWRSPYGLTPRGRNRGTVFS) are cytoplasmic. An intramembrane region (discontinuously helical) is located at residues 616 to 627 (YSSALNLCYAIL). The Cytoplasmic portion of the chain corresponds to 628-641 (FGRTVSSKTPKCPT). A helical transmembrane segment spans residues 642 to 661 (GRFLMNLWAIFCLLVLSSYT). Topologically, residues 662-832 (ANLAAVMVGD…TLQMGVYHFS (171 aa)) are extracellular. Residue serine 701 coordinates glycine. Positions 701, 702, and 745 each coordinate D-serine. Aspartate 745 contributes to the glycine binding site. Asparagine 786 carries N-linked (GlcNAc...) asparagine glycosylation. A helical membrane pass occupies residues 833-848 (GLFVLLCLGLGSALLT). The Cytoplasmic portion of the chain corresponds to 849-1002 (SLGEHVFYRL…RLLHAAPAES (154 aa)). Positions 882–910 (ALNTGPPEGQQERAEQERSGPKDELPATD) are disordered. Basic and acidic residues predominate over residues 891 to 906 (QQERAEQERSGPKDEL). Residues 944–985 (LCSNGPGLQAELRELELRIEAARERLRSALLRRGELRALLGD) are a coiled coil. The involved in the trafficking and surface expression of NMDARs stretch occupies residues 951–984 (LQAELRELELRIEAARERLRSALLRRGELRALLG).

It belongs to the glutamate-gated ion channel (TC 1.A.10.1) family. NR3B/GRIN3B subfamily. In terms of assembly, forms heterotetrameric channels that contain at least two GluN1 subunits and at least a combination of one GluN2 and one GluN3 subunits (in vitro). Forms heterotetrameric channels composed of two GluN1/zeta subunits (GRIN1), and two identical GluN3 subunits (GRIN3A or GRIN3B) (in vitro). Does not form functional homomeric channels. Expressed in the hippocampus, the corpus callosum, in the facial and trigeminal nuclei of the brainstem and the ventral horn of the spinal cord.

The protein resides in the cell membrane. It localises to the postsynaptic cell membrane. The enzyme catalyses Ca(2+)(in) = Ca(2+)(out). It catalyses the reaction Na(+)(in) = Na(+)(out). Its activity is regulated as follows. Excitatory glycine receptors are inhibited by D-serine at a concentrion of 100uM. Functionally, component of a non-conventional N-methyl-D-aspartate (NMDA) receptors (NMDARs) that function as heterotetrameric, ligand-gated cation channels with low calcium permeability and low voltage-dependent block by Mg(2+). Forms glutamatergic receptor complexes with GluN1 and GluN2 subunits which are activated by glycine binding to the GluN1 and GluN3 subunits and L-glutamate binding to GluN2 subunits. Forms excitatory glycinergic receptor complexes with GluN1 alone which are activated by glycine binding to the GluN1 and GluN3 subunits. GluN3B subunit also binds D-serine and, in the absence of glycine, activates glycinergic receptor complexes, but with lower efficacy than glycine. Each GluN3 subunit confers differential attributes to channel properties, including activation, deactivation and desensitization kinetics, pH sensitivity, Ca2(+) permeability, and binding to allosteric modulators. This chain is Glutamate receptor ionotropic, NMDA 3B, found in Rattus norvegicus (Rat).